A 228-amino-acid polypeptide reads, in one-letter code: Translin (228 aa).

Residues 86–90 are DNA/RNA binding; that stretch reads RFHEH. Positions 177-198 are leucine-zipper; the sequence is LDSGFRLLNLKNDSLRKRYDGL. K187 bears the N6-acetyllysine mark. A Phosphoserine modification is found at S190. N6-acetyllysine is present on K199.

This sequence belongs to the translin family. In terms of assembly, ring-shaped heterooctamer of six TSN and two TSNAX subunits, DNA/RNA binding occurs inside the ring.

It localises to the cytoplasm. The protein localises to the nucleus. Functionally, DNA-binding protein that specifically recognizes consensus sequences at the breakpoint junctions in chromosomal translocations, mostly involving immunoglobulin (Ig)/T-cell receptor gene segments. Seems to recognize single-stranded DNA ends generated by staggered breaks occurring at recombination hot spots. Its function is as follows. Exhibits both single-stranded and double-stranded endoribonuclease activity. May act as an activator of RNA-induced silencing complex (RISC) by facilitating endonucleolytic cleavage of the siRNA passenger strand. The chain is Translin (TSN) from Pongo abelii (Sumatran orangutan).